Reading from the N-terminus, the 68-residue chain is Frenatin-3 (68 aa).

Positions 1 to 22 are cleaved as a signal peptide; that stretch reads MHFLKKSIFLVLFLGLVSLSIC. Positions 23-46 are excised as a propeptide; the sequence is EKEKREDQNEEEVDENEEESEEKR. Residues 26 to 47 form a disordered region; sequence KREDQNEEEVDENEEESEEKRG. The segment covering 30–42 has biased composition (acidic residues); it reads QNEEEVDENEEES.

The protein belongs to the frog skin active peptide (FSAP) family. Frenatin subfamily. Expressed by the granular skin glands.

It localises to the secreted. Functionally, antimicrobial peptide with activity against both Gram-positive and Gram-negative bacteria. Antibacterial activities have been tested against Bacillus cereus (MIC=12.5 ug/ml), Escherichia coli (MIC=50 ug/ml), Leuconostoc mesenteroides (MIC=25 ug/ml), Micrococcus luteus (MIC=1.5 ug/ml), Pastewella haemolytica (MIC=0.8 ug/ml), Staphylococcus aureus (MIC&lt;l00 ug/ml), Streptococcus faecalis (MIC&lt;150 ug/ml) and Streptococcus uberis (MIC=50 ug/ml). Strongly inhibits the formation of NO by neuronal nitric oxide synthase (nNOS) at micromolar concentrations. Acts by a non-competitive mechanism, probably by binding to calcium/calmodulin and as a consequence blocking calmodulin attachment to nNOS. This chain is Frenatin-3, found in Nyctimystes infrafrenatus (White-lipped tree frog).